The sequence spans 258 residues: F-box/SPRY domain-containing protein 1 (258 aa).

The 49-residue stretch at 6–54 folds into the F-box domain; the sequence is TEYAPDIPDNVLELIFSYLKLQDLRNCALVCKSWHRFLSDENNEVWRAQ. Residues 64–256 enclose the B30.2/SPRY domain; sequence FKTDLLSVVP…ISMVYLGPPL (193 aa).

Belongs to the FBXO45/Fsn family. As to quaternary structure, component of an E3 ubiquitin ligase complex composed of hiw and Fsn.

It localises to the synapse. Its pathway is protein modification; protein ubiquitination. In terms of biological role, required in the presynaptic motoneuron to down-regulate the levels of wnd and restrain synaptic terminal growth at the neuromuscular junction (NMJ). In Culex quinquefasciatus (Southern house mosquito), this protein is F-box/SPRY domain-containing protein 1.